We begin with the raw amino-acid sequence, 906 residues long: MTAVHAGNINFKWDPKSLEIRTLAVERLLEPLVTQVTTLVNTNSKGPSNKKRGRSKKAHVLAASVEQATENFLEKGDKIAKESQFLKEELVVAVEDVRKQGDLMKSAAGEFADDPCSSVKRGNMVRAARALLSAVTRLLILADMADVYKLLVQLKVVEDGILKLRNAGNEQDLGIQYKALKPEVDKLNIMAAKRQQELKDVGNRDQMAAARGILQKNVPILYTASQACLQHPDVAAYKANRDLIYKQLQQAVTGISNAAQATASDDAAQHQGGSGGELAYALNNFDKQIIVDPLSFSEERFRPSLEERLESIISGAALMADSSCTRDDRRERIVAECNAVRQALQDLLSEYMGNAGRKERSDALNSAIDKMTKKTRDLRRQLRKAVMDHVSDSFLETNVPLLVLIEAAKNGNEKEVKEYAQVFREHANKLIEVANLACSISNNEEGVKLVRMSASQLEALCPQVINAALALAAKPQSKLAQENMDLFKEQWEKQVRVLTDAVDDITSIDDFLAVSENHILEDVNKCVIALQEKDVDGLDRTAGAIRGRAARVIHVVTSEMDNYEPGVYTEKVLEATKLLSNTVMPRFTEQVEAAVEALSSDPAQPMDENEFIDASRLVYDGIRDIRKAVLMIRTPEELDDSDFETEDFDVRSRTSVQTEDDQLIAGQSARAIMAQLPQEQKAKIAEQVASFQEEKSKLDAEVSKWDDSGNDIIVLAKQMCMIMMEMTDFTRGKGPLKNTSDVISAAKKIAEAGSRMDKLGRTIADHCPDSACKQDLLAYLQRIALYCHQLNICSKVKAEVQNLGGELVVSGVDSAMSLIQAAKNLMNAVVQTVKASYVASTKYQKSQGMASLNLPAVSWKMKAPEKKPLVKREKQDETQTKIKRASQKKHVNPVQALSEFKAMDSI.

Position 2 is an N-acetylthreonine (T2). The involved in homodimerization stretch occupies residues 2-228 (TAVHAGNINF…PILYTASQAC (227 aa)). K57 participates in a covalent cross-link: Glycyl lysine isopeptide (Lys-Gly) (interchain with G-Cter in SUMO2). Residues 97–148 (VRKQGDLMKSAAGEFADDPCSSVKRGNMVRAARALLSAVTRLLILADMADVY) are interaction with JUP and CTNNB1. A phosphoserine mark is found at S264, S295, and S297. Positions 325–394 (TRDDRRERIV…AVMDHVSDSF (70 aa)) are interaction with alpha-actinin. T634 is modified (phosphothreonine). S641 is subject to Phosphoserine. T645 is subject to Phosphothreonine. Phosphoserine is present on residues S652 and S655. Phosphothreonine is present on T658. K797 is covalently cross-linked (Glycyl lysine isopeptide (Lys-Gly) (interchain with G-Cter in SUMO2)). Position 851 is a phosphoserine (S851). Residues 864–880 (PEKKPLVKREKQDETQT) are compositionally biased toward basic and acidic residues. Residues 864–894 (PEKKPLVKREKQDETQTKIKRASQKKHVNPV) form a disordered region. The segment covering 881 to 891 (KIKRASQKKHV) has biased composition (basic residues).

This sequence belongs to the vinculin/alpha-catenin family. In terms of assembly, monomer and homodimer; the monomer preferentially binds to CTNNB1 and the homodimer to actin. Component of an cadherin:catenin adhesion complex composed of at least of CDH26, beta-catenin/CTNNB1, alpha-catenin/CTNNA1 and p120 catenin/CTNND1. Possible component of an E-cadherin/ catenin adhesion complex together with E-cadherin/CDH1 and beta-catenin/CTNNB1 or gamma-catenin/JUP; the complex is located to adherens junctions. The stable association of CTNNA1 is controversial as CTNNA1 was shown not to bind to F-actin when assembled in the complex. Alternatively, the CTNNA1-containing complex may be linked to F-actin by other proteins such as LIMA1. Binds AFDN and F-actin. Interacts with LIMA1. Interacts with ARHGAP21. Interacts with AJUBA. Interacts with vinculin/VCL. Interacts with TJP2/ZO2 (via N-terminus). Interacts with TJP1/ZO1 (via N-terminus). In terms of processing, sumoylated. Post-translationally, phosphorylation seems to contribute to the strength of cell-cell adhesion rather than to the basic capacity for cell-cell adhesion. In terms of tissue distribution, expressed in cerebellum, heart, liver, small intestine, kidney and placenta (at protein level).

Its subcellular location is the cytoplasm. It is found in the cytoskeleton. The protein resides in the cell junction. It localises to the adherens junction. The protein localises to the cell membrane. Its subcellular location is the nucleus. In terms of biological role, associates with the cytoplasmic domain of a variety of cadherins. The association of catenins to cadherins produces a complex which is linked to the actin filament network, and which seems to be of primary importance for cadherins cell-adhesion properties. Can associate with both E- and N-cadherins. Originally believed to be a stable component of E-cadherin/catenin adhesion complexes and to mediate the linkage of cadherins to the actin cytoskeleton at adherens junctions. In contrast, cortical actin was found to be much more dynamic than E-cadherin/catenin complexes and CTNNA1 was shown not to bind to F-actin when assembled in the complex suggesting a different linkage between actin and adherens junctions components. The homodimeric form may regulate actin filament assembly and inhibit actin branching by competing with the Arp2/3 complex for binding to actin filaments. Involved in the regulation of WWTR1/TAZ, YAP1 and TGFB1-dependent SMAD2 and SMAD3 nuclear accumulation. May play a crucial role in cell differentiation. The protein is Catenin alpha-1 of Mus musculus (Mouse).